We begin with the raw amino-acid sequence, 285 residues long: MMSDYNWFEGIPFPAISYQREILEDIRNKFVVKEEDLLILTYPKSGTNWLNEIVCLIQTKGDPKWIQTVPIWDRSPWIETEIGYSAIINKEGPRLITSHLPIHLFSKSFFSSKAKAIYLMRNPRDILVSGYFFWGNTNLVKNPGSLGTYFEWFLQGNVLFGSWFEHVRGWLSMREWDNFLVLYYEDMKKDTKGTIKKICDFLGKNLGPDELDLVLKYSSFQAMKENNMSNYSLIKEDRVTNGLKLMRKGTTGDWKNHFTVAQAEAFDKVFQEKMAGFPPGMFPWE.

Residues lysine 44, serine 45, glycine 46, threonine 47, asparagine 48, and tryptophan 49 each contribute to the 3'-phosphoadenylyl sulfate site. Histidine 99 (proton acceptor) is an active-site residue. 3'-phosphoadenylyl sulfate-binding residues include arginine 121, serine 129, tyrosine 184, serine 218, methionine 223, arginine 247, lysine 248, and glycine 249.

It belongs to the sulfotransferase 1 family.

The protein localises to the cytoplasm. The catalysed reaction is an alcohol + 3'-phosphoadenylyl sulfate = an alkyl sulfate + adenosine 3',5'-bisphosphate + H(+). Functionally, sulfotransferase that utilizes 3'-phospho-5'-adenylyl sulfate (PAPS) as sulfonate donor to catalyze the sulfate conjugation of a potential wide variety of acceptor molecules bearing a hydroxyl group. Sulfonation increases the water solubility of most compounds, and therefore their renal excretion, but it can also result in bioactivation to form active metabolites. The polypeptide is Sulfotransferase 2A2 (Mus musculus (Mouse)).